The following is an 836-amino-acid chain: Serine/threonine-protein kinase ATG1 (836 aa).

The Protein kinase domain occupies 21–321 (YTVEKEIGKG…FNEFFNNEVV (301 aa)). ATP is bound by residues 27 to 35 (IGKGSFAIV) and Lys-50. The Proton acceptor role is filled by Asp-168. 3 disordered regions span residues 387–425 (EHYR…GQTR), 458–489 (NNGP…GGRR), and 619–642 (CAID…TPGA). Residues 395 to 404 (LQGQQQQQQQ) are compositionally biased toward low complexity. Composition is skewed to polar residues over residues 411 to 425 (RGST…GQTR), 459 to 468 (NGPTTNNQGA), and 630 to 640 (GNPSSNQTLTP). The tract at residues 571–836 (ITPFVESLSA…RLKALKSKMS (266 aa)) is interaction with ATG13.

Belongs to the protein kinase superfamily. Ser/Thr protein kinase family. APG1/unc-51/ULK1 subfamily. In terms of assembly, homodimer. Dimerization requires the presence of ATG13. Forms a ternary complex with ATG13 and ATG17.

The protein resides in the cytoplasm. It localises to the preautophagosomal structure membrane. The enzyme catalyses L-seryl-[protein] + ATP = O-phospho-L-seryl-[protein] + ADP + H(+). It catalyses the reaction L-threonyl-[protein] + ATP = O-phospho-L-threonyl-[protein] + ADP + H(+). In terms of biological role, serine/threonine protein kinase involved in the cytoplasm to vacuole transport (Cvt) and found to be essential in autophagy, where it is required for the formation of autophagosomes. Involved in the clearance of protein aggregates which cannot be efficiently cleared by the proteasome. Required for selective autophagic degradation of the nucleus (nucleophagy) as well as for mitophagy which contributes to regulate mitochondrial quantity and quality by eliminating the mitochondria to a basal level to fulfill cellular energy requirements and preventing excess ROS production. Also involved in endoplasmic reticulum-specific autophagic process, in selective removal of ER-associated degradation (ERAD) substrates. Plays a key role in ATG9 and ATG23 cycling through the pre-autophagosomal structure and is necessary to promote ATG18 binding to ATG9 through phosphorylation of ATG9. Catalyzes phosphorylation of ATG4, decreasing the interaction between ATG4 and ATG8 and impairing deconjugation of PE-conjugated forms of ATG8. The chain is Serine/threonine-protein kinase ATG1 from Kluyveromyces marxianus (strain DMKU3-1042 / BCC 29191 / NBRC 104275) (Yeast).